A 149-amino-acid chain; its full sequence is Placenta growth factor (149 aa).

The signal sequence occupies residues 1–18 (MPTVRLFTCFLQLLTGLV). Residue N33 is glycosylated (N-linked (GlcNAc...) asparagine). Cystine bridges form between C52-C94, C83-C128, and C87-C130. N101 carries N-linked (GlcNAc...) asparagine glycosylation.

It belongs to the PDGF/VEGF growth factor family. In terms of assembly, antiparallel homodimer; disulfide-linked. Also found as heterodimer with VEGFA/VEGF.

Its subcellular location is the secreted. Growth factor active in angiogenesis and endothelial cell growth, stimulating their proliferation and migration. It binds to the receptor FLT1/VEGFR-1. Also promotes cell tumor growth. This Bos taurus (Bovine) protein is Placenta growth factor (PGF).